The primary structure comprises 227 residues: Urease accessory protein UreG (227 aa).

The segment covering 1 to 10 has biased composition (basic and acidic residues); the sequence is MHLDHAHTHD. The tract at residues 1-22 is disordered; sequence MHLDHAHTHDGPSAVSADAHRP. A GTP-binding site is contributed by 35 to 42; the sequence is GPVGSGKT.

The protein belongs to the SIMIBI class G3E GTPase family. UreG subfamily. Homodimer. UreD, UreF and UreG form a complex that acts as a GTP-hydrolysis-dependent molecular chaperone, activating the urease apoprotein by helping to assemble the nickel containing metallocenter of UreC. The UreE protein probably delivers the nickel.

The protein resides in the cytoplasm. Functionally, facilitates the functional incorporation of the urease nickel metallocenter. This process requires GTP hydrolysis, probably effectuated by UreG. In Streptomyces avermitilis (strain ATCC 31267 / DSM 46492 / JCM 5070 / NBRC 14893 / NCIMB 12804 / NRRL 8165 / MA-4680), this protein is Urease accessory protein UreG.